The chain runs to 116 residues: Fluoride-specific ion channel FluC 1 (116 aa).

4 helical membrane-spanning segments follow: residues 2–22 (LVLV…RYGI), 33–53 (PLPI…GWIL), 63–83 (IFLG…INEL), and 96–116 (WEYF…GTLI). The Na(+) site is built by Gly71 and Thr74.

The protein belongs to the fluoride channel Fluc/FEX (TC 1.A.43) family.

Its subcellular location is the cell membrane. The enzyme catalyses fluoride(in) = fluoride(out). With respect to regulation, na(+) is not transported, but it plays an essential structural role and its presence is essential for fluoride channel function. In terms of biological role, fluoride-specific ion channel. Important for reducing fluoride concentration in the cell, thus reducing its toxicity. The sequence is that of Fluoride-specific ion channel FluC 1 from Lactiplantibacillus plantarum (strain ATCC BAA-793 / NCIMB 8826 / WCFS1) (Lactobacillus plantarum).